The following is a 436-amino-acid chain: UPF0597 protein YhaM (436 aa).

This sequence belongs to the UPF0597 family.

The sequence is that of UPF0597 protein YhaM from Salmonella typhi.